Here is a 759-residue protein sequence, read N- to C-terminus: Protein AKNAD1 (759 aa).

The segment at 169–246 (TDQLNPKKDG…HTEKASSGNR (78 aa)) is disordered. The span at 181–192 (SNKPGSPTMTEE) shows a compositional bias: polar residues. Residues 371–482 (QKISQGKQMC…EDVKDKVDES (112 aa)) adopt a coiled-coil conformation. Over residues 484–496 (YTSAPSLPVSSPV) the composition is skewed to polar residues. Disordered stretches follow at residues 484 to 543 (YTSA…QEAP), 634 to 654 (EKAP…FCSD), 678 to 723 (CRKE…PSLA), and 735 to 759 (PDTS…MKSQ). The span at 497–509 (TLDDLASTSSSLS) shows a compositional bias: low complexity. The segment covering 639 to 654 (SDSTPNSDTGHSFCSD) has biased composition (polar residues). Positions 679 to 688 (RKEPPKEFHY) are enriched in basic and acidic residues. The segment covering 735–744 (PDTSKSSPTP) has biased composition (polar residues).

It belongs to the AKNA family.

The protein is Protein AKNAD1 (AKNAD1) of Macaca fascicularis (Crab-eating macaque).